Consider the following 433-residue polypeptide: Bifunctional urease accessory protein UreEF (433 aa).

Residues M1 to S200 form a urease accessory protein UreE region. A urease accessory protein UreF region spans residues S200–S433.

The protein in the N-terminal section; belongs to the UreE family. In the C-terminal section; belongs to the UreF family. As to quaternary structure, ureD, UreF and UreG form a complex that acts as a GTP-hydrolysis-dependent molecular chaperone, activating the urease apoprotein by helping to assemble the nickel containing metallocenter of UreC. The UreE protein probably delivers the nickel.

Its subcellular location is the cytoplasm. In terms of biological role, involved in urease metallocenter assembly. Binds nickel. Probably functions as a nickel donor during metallocenter assembly. Required for maturation of urease via the functional incorporation of the urease nickel metallocenter. The chain is Bifunctional urease accessory protein UreEF (ureEF) from Bordetella bronchiseptica (Alcaligenes bronchisepticus).